The sequence spans 226 residues: RING-H2 finger protein ATL75 (226 aa).

A helical transmembrane segment spans residues 60-80; sequence LMLLSVLICGIICCLGLHYII. Residues 136 to 178 form an RING-type; atypical zinc finger; that stretch reads CVICLSDFVSGEQIRMLPKCHHGFHVRCIDKWLQQHLTCPKCR.

The protein belongs to the RING-type zinc finger family. ATL subfamily.

It is found in the membrane. It carries out the reaction S-ubiquitinyl-[E2 ubiquitin-conjugating enzyme]-L-cysteine + [acceptor protein]-L-lysine = [E2 ubiquitin-conjugating enzyme]-L-cysteine + N(6)-ubiquitinyl-[acceptor protein]-L-lysine.. It participates in protein modification; protein ubiquitination. The polypeptide is RING-H2 finger protein ATL75 (ATL75) (Arabidopsis thaliana (Mouse-ear cress)).